The primary structure comprises 145 residues: Transcriptional regulator MraZ (145 aa).

SpoVT-AbrB domains lie at 5-47 and 76-119; these read EHQH…PLPE and AVEC…AKDQ.

It belongs to the MraZ family. In terms of assembly, forms oligomers.

It localises to the cytoplasm. The protein resides in the nucleoid. This Pelotomaculum thermopropionicum (strain DSM 13744 / JCM 10971 / SI) protein is Transcriptional regulator MraZ.